Here is a 503-residue protein sequence, read N- to C-terminus: ATP synthase subunit alpha, chloroplastic (503 aa).

170-177 lines the ATP pocket; sequence GDRQTGKT.

It belongs to the ATPase alpha/beta chains family. F-type ATPases have 2 components, CF(1) - the catalytic core - and CF(0) - the membrane proton channel. CF(1) has five subunits: alpha(3), beta(3), gamma(1), delta(1), epsilon(1). CF(0) has four main subunits: a, b, b' and c.

The protein localises to the plastid. It localises to the chloroplast thylakoid membrane. The enzyme catalyses ATP + H2O + 4 H(+)(in) = ADP + phosphate + 5 H(+)(out). In terms of biological role, produces ATP from ADP in the presence of a proton gradient across the membrane. The alpha chain is a regulatory subunit. The polypeptide is ATP synthase subunit alpha, chloroplastic (Trieres chinensis (Marine centric diatom)).